Here is a 221-residue protein sequence, read N- to C-terminus: Protein-L-isoaspartate O-methyltransferase (221 aa).

Ser64 is an active-site residue.

Belongs to the methyltransferase superfamily. L-isoaspartyl/D-aspartyl protein methyltransferase family.

The protein resides in the cytoplasm. It catalyses the reaction [protein]-L-isoaspartate + S-adenosyl-L-methionine = [protein]-L-isoaspartate alpha-methyl ester + S-adenosyl-L-homocysteine. Catalyzes the methyl esterification of L-isoaspartyl residues in peptides and proteins that result from spontaneous decomposition of normal L-aspartyl and L-asparaginyl residues. It plays a role in the repair and/or degradation of damaged proteins. This chain is Protein-L-isoaspartate O-methyltransferase, found in Cytophaga hutchinsonii (strain ATCC 33406 / DSM 1761 / CIP 103989 / NBRC 15051 / NCIMB 9469 / D465).